A 254-amino-acid chain; its full sequence is PF03932 family protein CutC (254 aa).

This sequence belongs to the CutC family.

The protein localises to the cytoplasm. In Yersinia pseudotuberculosis serotype I (strain IP32953), this protein is PF03932 family protein CutC.